The chain runs to 92 residues: Putative defensin-like protein 225 (92 aa).

Positions 1–26 are cleaved as a signal peptide; that stretch reads MKYGVLFMVSCGVMFLILSHVEEVEA. 3 disulfide bridges follow: Cys32–Cys92, Cys42–Cys70, and Cys68–Cys88.

It belongs to the DEFL family.

Its subcellular location is the secreted. This is Putative defensin-like protein 225 (SCRL1) from Arabidopsis thaliana (Mouse-ear cress).